The chain runs to 711 residues: Hydroperoxide isomerase ALOXE3 (711 aa).

The PLAT domain maps to 2–119 (AVYRLCVTTG…TVELRPGTAR (118 aa)). Residues 120 to 711 (TICQDSLPLL…PPLIENSVSI (592 aa)) form the Lipoxygenase domain. His-408, His-413, His-588, Asn-592, and Ile-711 together coordinate Fe cation.

This sequence belongs to the lipoxygenase family. Fe cation is required as a cofactor. As to expression, skin specific.

The protein resides in the cytoplasm. The catalysed reaction is a hydroperoxyeicosatetraenoate = a hydroxy-epoxy-eicosatetraenoate. The enzyme catalyses (8S)-hydroperoxy-(5Z,9E,11Z,14Z)-eicosatetraenoate = (10R)-hydroxy-(8S,9S)-epoxy-(5Z,11Z,14Z)-eicosatrienoate. It carries out the reaction (12R)-hydroperoxy-(5Z,8Z,10E,14Z)-eicosatetraenoate = (8R)-hydroxy-(11R,12R)-epoxy-(5Z,9E,14Z)-eicosatrienoate. It catalyses the reaction (12S)-hydroperoxy-(5Z,8Z,10E,14Z)-eicosatetraenoate = (8R)-hydroxy-(11S,12S)-epoxy-(5Z,9E,14Z)-eicosatrienoate. The catalysed reaction is (12S)-hydroperoxy-(5Z,8Z,10E,14Z)-eicosatetraenoate = (10R)-hydroxy-(11S,12S)-epoxy-(5Z,8Z,14Z)-eicosatrienoate. The enzyme catalyses (15S)-hydroperoxy-(5Z,8Z,11Z,13E)-eicosatetraenoate = (13R)-hydroxy-(14S,15S)-epoxy-(5Z,8Z,11Z)-eicosatrienoate. It carries out the reaction (13S)-hydroperoxy-(9Z,11E)-octadecadienoate = 11-hydroxy-(12S,13S)-epoxy-(9Z)-octadecenoate. It catalyses the reaction (5S)-hydroperoxy-(6E,8Z,11Z,14Z)-eicosatetraenoate = 7R-hydroxy-5S,6S-epoxy-(8Z,11Z,14Z)-eicosatrienoate. The catalysed reaction is N-[omega-(9R)-hydroperoxy-(10E,12Z)-octadecadienoyloxy]acyl-beta-D-glucosyl-(1&lt;-&gt;1)-octadecasphing-4E-enine = a N-[omega-(9R,10R)-epoxy-(13R)-hydroxy-(11E)-octadecenoyloxy]acyl-beta-D-glucosyl-(1&lt;-&gt;1)-sphing-4E-enine. The enzyme catalyses a N-[omega-(9R)-hydroperoxy-(10E,12Z)-octadecadienoyloxy]-acylsphin-4E-enine = a N-[omega-(9R,10R)-epoxy-(13R)-hydroxy-(11E)-octadecenoyloxy]-acylsphing-4E-enine. It carries out the reaction a hydroperoxyeicosatetraenoate = an oxoeicosatetraenoate + H2O. It catalyses the reaction (8R)-hydroperoxy-(5Z,9E,11Z,14Z)-eicosatetraenoate = 8-oxo-(5Z,9E,11Z,14Z)-eicosatetraenoate + H2O. The catalysed reaction is (8S)-hydroperoxy-(5Z,9E,11Z,14Z)-eicosatetraenoate = 8-oxo-(5Z,9E,11Z,14Z)-eicosatetraenoate + H2O. The enzyme catalyses (12R)-hydroperoxy-(5Z,8Z,10E,14Z)-eicosatetraenoate = 12-oxo-(5Z,8Z,10E,14Z)-eicosatetraenoate + H2O. It carries out the reaction (12S)-hydroperoxy-(5Z,8Z,10E,14Z)-eicosatetraenoate = 12-oxo-(5Z,8Z,10E,14Z)-eicosatetraenoate + H2O. It catalyses the reaction (15S)-hydroperoxy-(5Z,8Z,11Z,13E)-eicosatetraenoate = 15-oxo-(5Z,8Z,11Z,13E)-eicosatetraenoate + H2O. The catalysed reaction is (13S)-hydroperoxy-(9Z,11E)-octadecadienoate = 13-oxo-(9Z,11E)-octadecadienoate + H2O. The protein operates within lipid metabolism; hydroperoxy eicosatetraenoic acid biosynthesis. It functions in the pathway lipid metabolism; sphingolipid metabolism. Its function is as follows. Non-heme iron-containing lipoxygenase which is atypical in that it displays a prominent hydroperoxide isomerase activity and a reduced lipoxygenases activity. The hydroperoxide isomerase activity catalyzes the isomerization of hydroperoxides, derived from arachidonic and linoleic acid by ALOX12B, into hepoxilin-type epoxyalcohols and ketones. In presence of oxygen, oxygenates polyunsaturated fatty acids, including arachidonic acid, to produce fatty acid hydroperoxides. In the skin, acts downstream of ALOX12B on the linoleate moiety of esterified omega-hydroxyacyl-sphingosine (EOS) ceramides to produce an epoxy-ketone derivative, a crucial step in the conjugation of omega-hydroxyceramide to membrane proteins. Therefore plays a crucial role in the synthesis of corneocytes lipid envelope and the establishment of the skin barrier to water loss. In parallel, it may have a signaling function in barrier formation through the production of hepoxilins metabolites. Also plays a role in adipocyte differentiation through hepoxilin A3 and hepoxilin B3 production which in turn activate PPARG. Through the production of hepoxilins in the spinal cord, it may regulate inflammatory tactile allodynia. The polypeptide is Hydroperoxide isomerase ALOXE3 (Mus musculus (Mouse)).